We begin with the raw amino-acid sequence, 302 residues long: UDP-N-acetylenolpyruvoylglucosamine reductase (302 aa).

One can recognise an FAD-binding PCMH-type domain in the interval 23 to 188 (KVGGNAEIFF…LKAVFKVNKG (166 aa)). The active site involves Arg-168. The active-site Proton donor is the Ser-217. Glu-287 is a catalytic residue.

Belongs to the MurB family. The cofactor is FAD.

The protein resides in the cytoplasm. The catalysed reaction is UDP-N-acetyl-alpha-D-muramate + NADP(+) = UDP-N-acetyl-3-O-(1-carboxyvinyl)-alpha-D-glucosamine + NADPH + H(+). It participates in cell wall biogenesis; peptidoglycan biosynthesis. Its function is as follows. Cell wall formation. The protein is UDP-N-acetylenolpyruvoylglucosamine reductase of Rickettsia bellii (strain RML369-C).